The sequence spans 240 residues: 4-hydroxy-tetrahydrodipicolinate reductase (240 aa).

Residues 79-81 (ATT) and 103-106 (SANM) contribute to the NAD(+) site. Residue H135 is the Proton donor/acceptor of the active site. Residue H136 coordinates (S)-2,3,4,5-tetrahydrodipicolinate. K139 serves as the catalytic Proton donor. 145 to 146 (GT) provides a ligand contact to (S)-2,3,4,5-tetrahydrodipicolinate.

This sequence belongs to the DapB family.

It localises to the cytoplasm. It carries out the reaction (S)-2,3,4,5-tetrahydrodipicolinate + NAD(+) + H2O = (2S,4S)-4-hydroxy-2,3,4,5-tetrahydrodipicolinate + NADH + H(+). The enzyme catalyses (S)-2,3,4,5-tetrahydrodipicolinate + NADP(+) + H2O = (2S,4S)-4-hydroxy-2,3,4,5-tetrahydrodipicolinate + NADPH + H(+). Its pathway is amino-acid biosynthesis; L-lysine biosynthesis via DAP pathway; (S)-tetrahydrodipicolinate from L-aspartate: step 4/4. In terms of biological role, catalyzes the conversion of 4-hydroxy-tetrahydrodipicolinate (HTPA) to tetrahydrodipicolinate. This chain is 4-hydroxy-tetrahydrodipicolinate reductase, found in Staphylococcus aureus (strain bovine RF122 / ET3-1).